A 331-amino-acid polypeptide reads, in one-letter code: Olfactory receptor 10S1 (331 aa).

The Extracellular segment spans residues 1 to 38 (MTSRSVCEKMTMTTENPNQTVVSHFFLEGLRYTAKHSS). An N-linked (GlcNAc...) asparagine glycan is attached at N18. The chain crosses the membrane as a helical span at residues 39–59 (LFFLLFLLIYSITVAGNLLIL). At 60–67 (LTVGSDSH) the chain is on the cytoplasmic side. Residues 68–88 (LSLPMYHFLGHLSFLDACLST) form a helical membrane-spanning segment. Residues 89–113 (VTVPKVMAGLLTLDGKVISFEGCAV) lie on the Extracellular side of the membrane. A disulfide bridge connects residues C111 and C203. Residues 114-134 (QLYCFHFLASTECFLYTVMAY) form a helical membrane-spanning segment. Over 135–153 (DRYLAICQPLHYPVAMNRR) the chain is Cytoplasmic. Residues 154 to 174 (MCAEMAGITWAIGATHAAIHT) form a helical membrane-spanning segment. The Extracellular segment spans residues 175 to 211 (SLTFRLLYCGPCHIAYFFCDIPPVLKLACTDTTINEL). Residues 212 to 231 (VMLASIGIVAAGCLILIVIS) form a helical membrane-spanning segment. Residues 232–251 (YIFIVAAVLRIRTAQGRQRA) are Cytoplasmic-facing. The helical transmembrane segment at 252–272 (FSPCTAQLTGVLLYYVPPVCI) threads the bilayer. Residues 273–283 (YLQPRSSEAGA) lie on the Extracellular side of the membrane. Residues 284–304 (GAPAVFYTIVTPMLNPFIYTL) form a helical membrane-spanning segment. Residues 305–331 (RNKEVKHALQRLLCSSFRESTAGSPPP) lie on the Cytoplasmic side of the membrane.

It belongs to the G-protein coupled receptor 1 family.

It is found in the cell membrane. Its function is as follows. Odorant receptor. The protein is Olfactory receptor 10S1 (OR10S1) of Homo sapiens (Human).